Here is a 291-residue protein sequence, read N- to C-terminus: Inactive dihydropteroate synthase 2 (291 aa).

The Pterin-binding domain maps to 15–272 (QLIMAIVNRT…EVVATRRVLE (258 aa)).

This sequence belongs to the DHPS family. Homodimer.

In terms of biological role, has very low affinity for the DHPS substrate 6-hydroxymethyl-7,8-dihydropterin-pyrophosphate, but can bind the inhibitor dapsone. Seems to lack dihydropteroate synthase activity, and does probably not function in folate metabolism. This Mycobacterium leprae (strain TN) protein is Inactive dihydropteroate synthase 2 (folP2).